Consider the following 639-residue polypeptide: CTTNBP2 N-terminal-like protein (639 aa).

Positions 87–285 form a coiled coil; it reads MKQCKNMQER…DLEASHQHSS (199 aa). Phosphoserine is present on residues S284 and S285. Disordered stretches follow at residues 387-430, 463-490, and 511-609; these read VENG…PCSS, RHKFQSQADQDQQASGLQSPPSRDLSPT, and RFTS…AASL. Composition is skewed to low complexity over residues 407–430 and 467–477; these read PSSGSSLSPSSTASSSLTSSPCSS and QSQADQDQQAS. S481, S488, S523, S527, S560, S563, and S568 each carry phosphoserine. Polar residues predominate over residues 511–529; it reads RFTSQQGPIKPVSPNSSPF. Phosphothreonine is present on residues T570 and T590. Over residues 587–600 the composition is skewed to low complexity; that stretch reads PGLTPSPSATTPLT. Residue S592 is modified to Phosphoserine.

As to quaternary structure, interacts with CTTN/cortactin; this interaction may redistribute CTTN to stress fibers. May form homomers. Associates with the core of STRIPAK complexes composed of PP2A catalytic and scaffolding subunits, the striatins (PP2A regulatory subunits), the striatin-associated proteins MOB4, STRIP1 and STRIP2, PDCD10 and members of the STE20 kinases, such as STK24 and STK26.

Its subcellular location is the cell projection. It is found in the lamellipodium. The protein localises to the cytoplasm. It localises to the cytoskeleton. The protein resides in the stress fiber. Its function is as follows. Regulates lamellipodial actin dynamics in a CTTN-dependent manner. Associates with core striatin-interacting phosphatase and kinase (STRIPAK) complex to form CTTNBP2NL-STRIPAK complexes. STRIPAK complexes have critical roles in protein (de)phosphorylation and are regulators of multiple signaling pathways including Hippo, MAPK, nuclear receptor and cytoskeleton remodeling. Different types of STRIPAK complexes are involved in a variety of biological processes such as cell growth, differentiation, apoptosis, metabolism and immune regulation. This is CTTNBP2 N-terminal-like protein (CTTNBP2NL) from Pongo abelii (Sumatran orangutan).